We begin with the raw amino-acid sequence, 661 residues long: UvrABC system protein B (661 aa).

The Helicase ATP-binding domain occupies 25–414 (AGLNSKKRSQ…DTVVELIIRP (390 aa)). 38–45 (GITGSGKT) contacts ATP. The Beta-hairpin motif lies at 91-114 (YYDYYQPEAYIARTDTFIEKDSSI). The Helicase C-terminal domain maps to 430–592 (QVEDLIGEIQ…IIPKTINRAI (163 aa)). The 36-residue stretch at 621–656 (KAHIEKLKKDMLKAASNLEFEQAAKLRDQLKTLEEA) folds into the UVR domain.

It belongs to the UvrB family. Forms a heterotetramer with UvrA during the search for lesions. Interacts with UvrC in an incision complex.

Its subcellular location is the cytoplasm. Its function is as follows. The UvrABC repair system catalyzes the recognition and processing of DNA lesions. A damage recognition complex composed of 2 UvrA and 2 UvrB subunits scans DNA for abnormalities. Upon binding of the UvrA(2)B(2) complex to a putative damaged site, the DNA wraps around one UvrB monomer. DNA wrap is dependent on ATP binding by UvrB and probably causes local melting of the DNA helix, facilitating insertion of UvrB beta-hairpin between the DNA strands. Then UvrB probes one DNA strand for the presence of a lesion. If a lesion is found the UvrA subunits dissociate and the UvrB-DNA preincision complex is formed. This complex is subsequently bound by UvrC and the second UvrB is released. If no lesion is found, the DNA wraps around the other UvrB subunit that will check the other stand for damage. This chain is UvrABC system protein B, found in Rickettsia felis (strain ATCC VR-1525 / URRWXCal2) (Rickettsia azadi).